A 377-amino-acid chain; its full sequence is Succinyl-diaminopimelate desuccinylase (377 aa).

Position 68 (H68) interacts with Zn(2+). D70 is an active-site residue. Position 101 (D101) interacts with Zn(2+). The active-site Proton acceptor is the E135. 3 residues coordinate Zn(2+): E136, E164, and H350.

Belongs to the peptidase M20A family. DapE subfamily. As to quaternary structure, homodimer. Requires Zn(2+) as cofactor. It depends on Co(2+) as a cofactor.

It carries out the reaction N-succinyl-(2S,6S)-2,6-diaminopimelate + H2O = (2S,6S)-2,6-diaminopimelate + succinate. It participates in amino-acid biosynthesis; L-lysine biosynthesis via DAP pathway; LL-2,6-diaminopimelate from (S)-tetrahydrodipicolinate (succinylase route): step 3/3. Its function is as follows. Catalyzes the hydrolysis of N-succinyl-L,L-diaminopimelic acid (SDAP), forming succinate and LL-2,6-diaminopimelate (DAP), an intermediate involved in the bacterial biosynthesis of lysine and meso-diaminopimelic acid, an essential component of bacterial cell walls. The chain is Succinyl-diaminopimelate desuccinylase from Vibrio cholerae serotype O1 (strain ATCC 39541 / Classical Ogawa 395 / O395).